Consider the following 863-residue polypeptide: Receptor-like protein 9DC1 (863 aa).

A signal peptide spans 1 to 21; that stretch reads MGCVKLVFFMLYVFLFQLVSS. At 22–812 the chain is on the extracellular side; that stretch reads SSLPHLCPED…EEDSPMISWQ (791 aa). The segment at 24–90 is N-cap; the sequence is LPHLCPEDQA…GVHCDETTGQ (67 aa). 2 N-linked (GlcNAc...) asparagine glycosylation sites follow: Asn-71 and Asn-108. Residues 91 to 114 form an LRR 1; degenerate repeat; it reads VIALDLRCSQLQGKFHSNSSLFQL. LRR repeat units lie at residues 115-138 and 140-163; these read SNLK…KFGE and SDLT…ISHL. Residues 164–190 form an LRR 4; degenerate repeat; that stretch reads SKLHVLLIGDQYGLSIVPHNFEPLLKN. N-linked (GlcNAc...) asparagine glycans are attached at residues Asn-190, Asn-203, and Asn-211. LRR repeat units follow at residues 191–213, 214–237, 240–262, 264–286, 287–311, and 312–336; these read LTQL…SNFS, SHLT…VFHL, LEFL…KWNS, ASLM…SFSH, LTSL…LWNL, and TNIE…IFEK. Asn-261 carries N-linked (GlcNAc...) asparagine glycosylation. 2 N-linked (GlcNAc...) asparagine glycosylation sites follow: Asn-299 and Asn-310. The LRR 11; degenerate repeat unit spans residues 337-357; that stretch reads LKKLSLFRNDNLDGGLEFLSF. LRR repeat units lie at residues 358–382, 383–406, 408–428, 429–452, 454–476, 477–500, 502–524, 525–549, 551–572, 573–597, 599–623, 667–690, 691–714, 715–739, and 741–759; these read NTQL…ISGL, QNLE…IFSL, SLVE…EFKS, KTLS…LLNQ, NLQL…ICNL, KTLI…VVER, EYLS…TFSV, GNIL…MINC, YLTL…WLGY, LFQL…GNTN, FMGL…ILGN, LDSN…IIGD, LVGL…SFQN, LSVL…LASL, and FLEV…IPKG. Asn-378, Asn-396, and Asn-416 each carry an N-linked (GlcNAc...) asparagine glycan. N-linked (GlcNAc...) asparagine glycosylation occurs at Asn-464. N-linked (GlcNAc...) asparagine glycosylation occurs at Asn-519. An N-linked (GlcNAc...) asparagine glycan is attached at Asn-563. Residues Asn-674, Asn-698, and Asn-714 are each glycosylated (N-linked (GlcNAc...) asparagine). Residues Asn-746 and Asn-767 are each glycosylated (N-linked (GlcNAc...) asparagine). The tract at residues 760–812 is C-cap/acidic domain; the sequence is KQFDSFGNTSYQGNDGLRGFPLSKLCGGEDQVTTPAELDQEEEEEDSPMISWQ. The chain crosses the membrane as a helical span at residues 813 to 833; it reads GVLVGYGCGLVIGLSVIYIMW. Topologically, residues 834 to 863 are cytoplasmic; the sequence is STQYPAWFSRMDLKLEHIITTKMKKHKKRY.

The protein belongs to the RLP family.

It is found in the cell membrane. Involved in plant defense. Confers resistance to the fungal pathogen C.fulvum through recognition of the AVR9 elicitor protein. The chain is Receptor-like protein 9DC1 from Solanum pimpinellifolium (Currant tomato).